The chain runs to 254 residues: 5-oxoprolinase subunit A (254 aa).

This sequence belongs to the LamB/PxpA family. Forms a complex composed of PxpA, PxpB and PxpC.

It carries out the reaction 5-oxo-L-proline + ATP + 2 H2O = L-glutamate + ADP + phosphate + H(+). Catalyzes the cleavage of 5-oxoproline to form L-glutamate coupled to the hydrolysis of ATP to ADP and inorganic phosphate. This Heliobacterium modesticaldum (strain ATCC 51547 / Ice1) protein is 5-oxoprolinase subunit A.